A 215-amino-acid chain; its full sequence is Probable nicotinate-nucleotide adenylyltransferase (215 aa).

This sequence belongs to the NadD family.

The catalysed reaction is nicotinate beta-D-ribonucleotide + ATP + H(+) = deamido-NAD(+) + diphosphate. It functions in the pathway cofactor biosynthesis; NAD(+) biosynthesis; deamido-NAD(+) from nicotinate D-ribonucleotide: step 1/1. In terms of biological role, catalyzes the reversible adenylation of nicotinate mononucleotide (NaMN) to nicotinic acid adenine dinucleotide (NaAD). The protein is Probable nicotinate-nucleotide adenylyltransferase of Coxiella burnetii (strain Dugway 5J108-111).